A 351-amino-acid polypeptide reads, in one-letter code: Ubiquinol oxidase 4, chloroplastic/chromoplastic (351 aa).

The transit peptide at 1 to 56 directs the protein to the chloroplast and chromoplast; the sequence is MAAISGISSGTLTISRPLVTLRRSRAAVSYSSSHRLLHHLPLSSRRLLLRNNHRVQ. The tract at residues 71 to 91 is disordered; sequence ESFKAETSTGTEPLEEPNMSS. A helical membrane pass occupies residues 132-152; it reads FFVLETIARVPYFAFMSVLHM. The Fe cation site is built by E136, E175, and H178. A helical transmembrane segment spans residues 195–215; sequence FLAQHIATFYYFMTVFLYILS. The Fe cation site is built by E227, E296, and H299.

This sequence belongs to the alternative oxidase family. Fe cation is required as a cofactor. As to expression, ubiquitous.

It is found in the plastid. Its subcellular location is the chloroplast thylakoid membrane. The protein localises to the chromoplast membrane. It catalyses the reaction 2 a ubiquinol + O2 = 2 a ubiquinone + 2 H2O. Its function is as follows. Acts early in chloroplast biogenesis as a component of a redox chain responsible for phytoene desaturation. Prevents the generation of toxic oxygen radicals and photooxidation of the nascent photosynthetic apparatus. Involved in the differentiation of multiple plastid types, including chloroplasts, amyloplasts, and etioplasts. Might participate in the chloroplast respiratory chain. The chain is Ubiquinol oxidase 4, chloroplastic/chromoplastic (AOX4) from Arabidopsis thaliana (Mouse-ear cress).